The following is a 488-amino-acid chain: Probable G-protein coupled receptor Mth-like 12 (488 aa).

Residues 1–17 (MFLWLKCFCTLIIVTIA) form the signal peptide. Residues 18–215 (KNSSAKIPHC…NRRCYRNVMP (198 aa)) are Extracellular-facing. N-linked (GlcNAc...) asparagine glycans are attached at residues asparagine 19, asparagine 34, and asparagine 55. Cystine bridges form between cysteine 27–cysteine 81, cysteine 83–cysteine 88, cysteine 92–cysteine 189, cysteine 93–cysteine 104, and cysteine 155–cysteine 209. Asparagine 141 is a glycosylation site (N-linked (GlcNAc...) asparagine). A helical transmembrane segment spans residues 216–236 (GIAQLSVISVVGFILTLAVYL). At 237–247 (SVEKLRNLLGK) the chain is on the cytoplasmic side. Residues 248–268 (CLICSLFSMFMEYFIWTMDYF) form a helical membrane-spanning segment. The Extracellular segment spans residues 269–283 (RLLQSICSAAGYMKY). A helical transmembrane segment spans residues 284-304 (FFSMSSYLWFSVVSFHLWELF). Over 305-315 (TSLNRHEPQYR) the chain is Cytoplasmic. The helical transmembrane segment at 316–336 (FLIYNTFVWCTAAIPTVVIFS) threads the bilayer. At 337-373 (MNQMWENDPGKSEWLPLVGYFGCSVKDWNSSSWFYSH) the chain is on the extracellular side. N-linked (GlcNAc...) asparagine glycosylation occurs at asparagine 365. Residues 374–394 (IPIVILNSFNVIMFVLTAIYI) form a helical membrane-spanning segment. The Cytoplasmic portion of the chain corresponds to 395–416 (WKVKKGVKSFAQHDERNTTCLE). Residues 417–437 (FNVQTYIQFVRLFLIMGASWL) traverse the membrane as a helical segment. Topologically, residues 438-454 (LDQLTRLAEDSHLLLDT) are extracellular. A helical membrane pass occupies residues 455-475 (IVLNLTVYLNAAFGILIFVLL). Topologically, residues 476-488 (ILKGSTFKMIMER) are cytoplasmic.

This sequence belongs to the G-protein coupled receptor 2 family. Mth subfamily.

It localises to the cell membrane. The sequence is that of Probable G-protein coupled receptor Mth-like 12 (mthl12) from Drosophila melanogaster (Fruit fly).